A 382-amino-acid chain; its full sequence is Anhydro-N-acetylmuramic acid kinase (382 aa).

An ATP-binding site is contributed by 22-29; it reads GTSMDGVD.

It belongs to the anhydro-N-acetylmuramic acid kinase family.

The enzyme catalyses 1,6-anhydro-N-acetyl-beta-muramate + ATP + H2O = N-acetyl-D-muramate 6-phosphate + ADP + H(+). It functions in the pathway amino-sugar metabolism; 1,6-anhydro-N-acetylmuramate degradation. Its pathway is cell wall biogenesis; peptidoglycan recycling. Catalyzes the specific phosphorylation of 1,6-anhydro-N-acetylmuramic acid (anhMurNAc) with the simultaneous cleavage of the 1,6-anhydro ring, generating MurNAc-6-P. Is required for the utilization of anhMurNAc either imported from the medium or derived from its own cell wall murein, and thus plays a role in cell wall recycling. The polypeptide is Anhydro-N-acetylmuramic acid kinase (Burkholderia ambifaria (strain ATCC BAA-244 / DSM 16087 / CCUG 44356 / LMG 19182 / AMMD) (Burkholderia cepacia (strain AMMD))).